The chain runs to 258 residues: C1q-related factor (258 aa).

The N-terminal stretch at methionine 1–glycine 16 is a signal peptide. Residues glycine 39–glycine 117 are disordered. Over residues glycine 67–lysine 77 the composition is skewed to low complexity. One can recognise a Collagen-like domain in the interval glycine 67–glycine 115. Residues proline 78–proline 95 are compositionally biased toward pro residues. In terms of domain architecture, C1q spans threonine 125–aspartate 258.

Interacts with ADGRB3. Forms heterooligomers with C1QL4, when proteins are coexpressed; this interaction does not occur after secretion. As to expression, expressed in brainstem.

The protein localises to the secreted. Its function is as follows. May regulate the number of excitatory synapses that are formed on hippocampus neurons. Has no effect on inhibitory synapses. The protein is C1q-related factor (C1QL1) of Homo sapiens (Human).